Here is a 629-residue protein sequence, read N- to C-terminus: Neuronal acetylcholine receptor subunit alpha-4 (629 aa).

Positions 1 to 30 (MEIGGSGAPPPLLLLPLLLLLGTGLLPASS) are cleaved as a signal peptide. Residues 32-249 (IETRAHAEER…IIRRLPLFYT (218 aa)) lie on the Extracellular side of the membrane. Asn59 is a glycosylation site (N-linked (GlcNAc...) asparagine). 2 residues coordinate Ca(2+): Val78 and Glu80. 2 N-linked (GlcNAc...) asparagine glycosylation sites follow: Asn109 and Asn176. 2 cysteine pairs are disulfide-bonded: Cys163–Cys177 and Cys227–Cys228. The chain crosses the membrane as a helical span at residues 250 to 270 (INLIIPCLLISCLTVLVFYLP). Residue Cys273 is the site of S-palmitoyl cysteine attachment. 2 helical membrane-spanning segments follow: residues 279–299 (LCIS…EIIP) and 312–332 (LLFT…VLNV). Topologically, residues 333–603 (HHRSPRTHTM…KYVAMVIDRI (271 aa)) are cytoplasmic. Disordered stretches follow at residues 420-459 (ETQP…NSSG) and 503-529 (SLTE…SDQT). At Ser427 the chain carries Phosphoserine. Residues 431-442 (KVPDLKTSEVEK) show a composition bias toward basic and acidic residues. Residues 449–459 (PGSCHPPNSSG) are compositionally biased toward low complexity. The span at 504–529 (LTESKPTGSPASLKTRPSQLPVSDQT) shows a compositional bias: polar residues. 2 positions are modified to phosphoserine: Ser540 and Ser543. The helical transmembrane segment at 604–624 (FLWMFIIVCLLGTVGLFLPPW) threads the bilayer.

The protein belongs to the ligand-gated ion channel (TC 1.A.9) family. Acetylcholine receptor (TC 1.A.9.1) subfamily. Alpha-4/CHRNA4 sub-subfamily. Neuronal AChR is composed of two different types of subunits: alpha and beta. CHRNA4 forms heteropentameric neuronal acetylcholine receptors with CHRNB2 and CHRNB4, as well as CHRNA5 and CHRNB3 as accesory subunits. Found in two major stoichiometric forms, LS (low agonist sensitivity): (CHRNA4)3:(CHRNB2)2 and HS (high agonist sensitivity): (CHRNA4)2:(CHRNB2)3, the two stoichiometric forms differ in their unitary conductance, calcium permeability, ACh sensitivity and potentiation by divalent cation. Cells produce predominantly an (CHRNA4)3:(CHRNB2)2 nAChR. The (CHRNA4)2:(CHRNB2)3 expression is selectively up-regulated by nicotine and has lower single channel conductance and calcium permeability. In the striatum, also forms CHRNA4:CHRNA6:CHRNB2 complexes. Also found in the stoichiometric form: (CHRNA4:CHRNB2)2:CHRNB3. Interacts with RIC3; which is required for proper folding and assembly. Interacts with LYPD6.

Its subcellular location is the synaptic cell membrane. It is found in the cell membrane. It catalyses the reaction K(+)(in) = K(+)(out). It carries out the reaction Na(+)(in) = Na(+)(out). The enzyme catalyses Ca(2+)(in) = Ca(2+)(out). With respect to regulation, activated by a myriad of ligands such as acetylcholine, cytisine, nicotine, choline and epibatidine. Channel potentiation by calcium is stoichiometry-selective, CHRNA4:CHRNB2 nACh receptor is achieved by calcium association with topographically distinct sites framed by anionic residues within the CHRNA4 subunit and between the CHRNA4 and CHRNB2 subunits. nAChR activity is inhibited by the antagonist alpha-conotoxins BuIA, PnIA, GID and MII, small disulfide-constrained peptides from cone snails. Functionally, component of neuronal acetylcholine receptors (nAChRs) that function as pentameric, ligand-gated cation channels with high calcium permeability among other activities. nAChRs are excitatory neurotrasnmitter receptors formed by a collection of nAChR subunits known to mediate synaptic transmission in the nervous system and the neuromuscular junction. Each nAchR subunit confers differential attributes to channel properties, including activation, deactivation and desensitization kinetics, pH sensitivity, cation permeability, and binding to allosteric modulators. CHRNA4 forms heteropentameric neuronal acetylcholine receptors with CHRNB2 and CHRNB4, as well as CHRNA5 and CHRNB3 as accesory subunits. Is the most abundant nAChR subtype expressed in the central nervous system. Found in two major stoichiometric forms,(CHRNA4)3:(CHRNB2)2 and (CHRNA4)2:(CHRNB2)3, the two stoichiometric forms differ in their unitary conductance, calcium permeability, ACh sensitivity and potentiation by divalent cation. Involved in the modulation of calcium-dependent signaling pathways, influences the release of neurotransmitters, including dopamine, glutamate and GABA. The polypeptide is Neuronal acetylcholine receptor subunit alpha-4 (Chrna4) (Mus musculus (Mouse)).